A 1440-amino-acid chain; its full sequence is Bridge-like lipid transfer protein family member 3A (1440 aa).

In terms of domain architecture, Chorein N-terminal spans 3-95; the sequence is GIIKKQILKH…KVEVEMKTCE (93 aa). 3 disordered regions span residues 267-307, 430-456, and 751-780; these read SAHQ…NSSS, ADSL…FQPP, and KPSA…TEHD. Positions 287 to 307 are enriched in low complexity; that stretch reads SAQQSWAQAFGGSQGNSNSSS. Phosphoserine is present on residues S444, S446, S755, and S758. Residues 837 to 860 are a coiled coil; that stretch reads ALLRLKEVLQRLQEQLTKDTESMT. Residues 891 to 1008 form a disordered region; it reads VDADSAGSDS…ETAVNGQGEL (118 aa). A compositionally biased stretch (basic and acidic residues) spans 911–920; it reads SEDRELKSDA. Positions 985 to 995 are enriched in low complexity; the sequence is ASSSPAALKPP. 3 positions are modified to phosphoserine: S988, S1103, and S1106. The disordered stretch occupies residues 1106–1180; that stretch reads SFDGVSLDSS…SPAANSSVSP (75 aa). Positions 1134 to 1150 are enriched in low complexity; the sequence is LLESESGPESVPPGSLS. Residues 1151 to 1180 show a composition bias toward polar residues; sequence NVSDNAGVQGSPLVNNYGQGSPAANSSVSP. Positions 1401–1435 form a coiled coil; it reads KELPILQKELIETKQALANANQDKEKLLQEIRKYN.

In terms of assembly, homodimer (Potential). Interacts with UHRF1.

It localises to the late endosome. Functionally, tube-forming lipid transport protein which probably mediates the transfer of lipids between membranes at organelle contact sites. May be involved in the retrograde traffic of vesicle clusters in the endocytic pathway to the Golgi complex. This chain is Bridge-like lipid transfer protein family member 3A, found in Homo sapiens (Human).